The chain runs to 1250 residues: DNA excision repair protein ERCC-6-like (1250 aa).

Ser14 carries the post-translational modification Phosphoserine. A TPR 1 repeat occupies 21 to 54; that stretch reads YLRYVKEAKEATKNGDLEEAFKLFNLAKDIFPNE. One can recognise a Helicase ATP-binding domain in the interval 109–277; it reads SLYRDGRKGG…WSLFDFACQG (169 aa). 122–129 contributes to the ATP binding site; it reads DDMGLGKT. The DEAH box motif lies at 228-231; that stretch reads DEAH. The region spanning 464-620 is the Helicase C-terminal domain; it reads FLMDLLKRLR…EKKNPFRYFS (157 aa). Positions 735-768 are disordered; that stretch reads VFPSSTKKKCPKLNKPQPQPSPLLSTHHTQEEDI. Phosphoserine occurs at positions 755, 774, 807, and 810. Residue Thr813 is modified to Phosphothreonine. Ser820 bears the Phosphoserine mark. Residues 926–946 form a disordered region; that stretch reads SALQDAQASEAKLEEEPSASS. Residues Ser969, Ser971, Ser995, Ser1004, and Ser1028 each carry the phosphoserine modification. Residues 1061-1092 form a disordered region; sequence ASTPKNDISPPGRFFSSQIPSSVNKSMNSRRS. Thr1063 is modified (phosphothreonine; by PLK1). Ser1069 bears the Phosphoserine mark. Positions 1075–1087 are enriched in polar residues; that stretch reads FSSQIPSSVNKSM. Ser1098 and Ser1118 each carry phosphoserine. Residues 1110–1199 are disordered; the sequence is MEERLDDSSE…QDKAAEATND (90 aa). Over residues 1115-1124 the composition is skewed to basic and acidic residues; the sequence is DDSSEAKGPE. The span at 1125-1135 shows a compositional bias: acidic residues; the sequence is DYPEEGVEESS. A compositionally biased stretch (polar residues) spans 1149 to 1173; it reads ETLSSENKSSWLMTSKPSALAQETS. Phosphoserine is present on residues Ser1181 and Ser1188. The TPR 2 repeat unit spans residues 1200 to 1233; it reads YETLVKRGKELKECGKIQEALNCLVKALDIKSAD.

Belongs to the SNF2/RAD54 helicase family. As to quaternary structure, interacts with PLK1, which phosphorylates it. Both proteins are mutually dependent on each other for correct subcellular localization. Interacts (via N-terminal TPR repeat) with BEND3 (via BEN domains 1 and 3); the interaction is direct. In terms of processing, phosphorylation by PLK1 prevents the association with chromosome arms and restricts its localization to the kinetochore-centromere region.

It localises to the chromosome. Its subcellular location is the centromere. The protein localises to the kinetochore. The catalysed reaction is ATP + H2O = ADP + phosphate + H(+). Functionally, DNA helicase that acts as a tension sensor that associates with catenated DNA which is stretched under tension until it is resolved during anaphase. Functions as ATP-dependent DNA translocase. Can promote Holliday junction branch migration (in vitro). This is DNA excision repair protein ERCC-6-like (ERCC6L) from Homo sapiens (Human).